The primary structure comprises 491 residues: Interferon regulatory factor 3 (491 aa).

The IRF tryptophan pentad repeat DNA-binding region spans 12–116; it reads KLRFGPWLLN…DPHKVYAVAS (105 aa).

This sequence belongs to the IRF family. In terms of tissue distribution, widely expressed with higher expression in lung, spleen and intestine.

Its subcellular location is the cytoplasm. It localises to the nucleus. In terms of biological role, key transcriptional regulator of type I interferon (IFN)-dependent immune responses which plays a critical role in the innate immune response against DNA and RNA viruses. Regulates the transcription of type I IFN genes (IFN-alpha and IFN-beta) and IFN-stimulated genes (ISG) by binding to an interferon-stimulated response element (ISRE) in their promoters. May activate transcription by complex formation with other transcriptional factors, possibly members of the STAT family. Binds specifically to the IFN-stimulated response element (ISRE) but not to the IRF-1 binding site PRD-I. The chain is Interferon regulatory factor 3 (IRF3) from Gallus gallus (Chicken).